The primary structure comprises 56 residues: Large ribosomal subunit protein bL33 (56 aa).

The protein belongs to the bacterial ribosomal protein bL33 family.

The polypeptide is Large ribosomal subunit protein bL33 (Campylobacter hominis (strain ATCC BAA-381 / DSM 21671 / CCUG 45161 / LMG 19568 / NCTC 13146 / CH001A)).